The primary structure comprises 506 residues: 2-isopropylmalate synthase (506 aa).

The 263-residue stretch at I4–K266 folds into the Pyruvate carboxyltransferase domain. 4 residues coordinate Mn(2+): D13, H201, H203, and N237. Residues N390–K506 form a regulatory domain region.

It belongs to the alpha-IPM synthase/homocitrate synthase family. LeuA type 1 subfamily. In terms of assembly, homodimer. Requires Mn(2+) as cofactor.

The protein resides in the cytoplasm. The enzyme catalyses 3-methyl-2-oxobutanoate + acetyl-CoA + H2O = (2S)-2-isopropylmalate + CoA + H(+). The protein operates within amino-acid biosynthesis; L-leucine biosynthesis; L-leucine from 3-methyl-2-oxobutanoate: step 1/4. Catalyzes the condensation of the acetyl group of acetyl-CoA with 3-methyl-2-oxobutanoate (2-ketoisovalerate) to form 3-carboxy-3-hydroxy-4-methylpentanoate (2-isopropylmalate). This Bacillus cereus (strain 03BB102) protein is 2-isopropylmalate synthase.